We begin with the raw amino-acid sequence, 158 residues long: Cyclic pyranopterin monophosphate synthase (158 aa).

Residues 75-77 and 113-114 contribute to the substrate site; these read LCH and ME. Asp-128 is an active-site residue.

It belongs to the MoaC family. As to quaternary structure, homohexamer; trimer of dimers.

It carries out the reaction (8S)-3',8-cyclo-7,8-dihydroguanosine 5'-triphosphate = cyclic pyranopterin phosphate + diphosphate. It participates in cofactor biosynthesis; molybdopterin biosynthesis. Functionally, catalyzes the conversion of (8S)-3',8-cyclo-7,8-dihydroguanosine 5'-triphosphate to cyclic pyranopterin monophosphate (cPMP). The protein is Cyclic pyranopterin monophosphate synthase of Vibrio campbellii (strain ATCC BAA-1116).